The chain runs to 1057 residues: Carbamoyl phosphate synthase large chain (1057 aa).

Positions Met1 to Glu401 are carboxyphosphate synthetic domain. Arg129, Arg169, Gly175, Gly176, Lys208, Ile210, Glu215, Gly241, Ile242, His243, Gln284, and Glu298 together coordinate ATP. An ATP-grasp 1 domain is found at Arg133–Val327. Mg(2+) is bound by residues Gln284, Glu298, and Asn300. Gln284, Glu298, and Asn300 together coordinate Mn(2+). Residues Tyr402–Ser546 form an oligomerization domain region. Residues Ile547–Gly929 are carbamoyl phosphate synthetic domain. The ATP-grasp 2 domain maps to Glu671 to Ile861. 10 residues coordinate ATP: Arg707, Arg746, Leu748, Glu752, Gly777, Val778, His779, Ser780, Gln820, and Glu832. Mg(2+) contacts are provided by Gln820, Glu832, and Asn834. Mn(2+) contacts are provided by Gln820, Glu832, and Asn834. An MGS-like domain is found at Val930 to Met1057. Positions Val930–Met1057 are allosteric domain.

This sequence belongs to the CarB family. Composed of two chains; the small (or glutamine) chain promotes the hydrolysis of glutamine to ammonia, which is used by the large (or ammonia) chain to synthesize carbamoyl phosphate. Tetramer of heterodimers (alpha,beta)4. Requires Mg(2+) as cofactor. It depends on Mn(2+) as a cofactor.

It catalyses the reaction hydrogencarbonate + L-glutamine + 2 ATP + H2O = carbamoyl phosphate + L-glutamate + 2 ADP + phosphate + 2 H(+). The enzyme catalyses hydrogencarbonate + NH4(+) + 2 ATP = carbamoyl phosphate + 2 ADP + phosphate + 2 H(+). Its pathway is amino-acid biosynthesis; L-arginine biosynthesis; carbamoyl phosphate from bicarbonate: step 1/1. The protein operates within pyrimidine metabolism; UMP biosynthesis via de novo pathway; (S)-dihydroorotate from bicarbonate: step 1/3. In terms of biological role, large subunit of the glutamine-dependent carbamoyl phosphate synthetase (CPSase). CPSase catalyzes the formation of carbamoyl phosphate from the ammonia moiety of glutamine, carbonate, and phosphate donated by ATP, constituting the first step of 2 biosynthetic pathways, one leading to arginine and/or urea and the other to pyrimidine nucleotides. The large subunit (synthetase) binds the substrates ammonia (free or transferred from glutamine from the small subunit), hydrogencarbonate and ATP and carries out an ATP-coupled ligase reaction, activating hydrogencarbonate by forming carboxy phosphate which reacts with ammonia to form carbamoyl phosphate. This Staphylococcus aureus (strain MRSA252) protein is Carbamoyl phosphate synthase large chain.